Reading from the N-terminus, the 192-residue chain is Phosphomevalonate kinase (192 aa).

ATP contacts are provided by residues 17 to 23 and R141; that span reads KRKSGKD. N170 is a substrate binding site. 2 residues coordinate ATP: H171 and Q180.

Monomer.

It localises to the cytoplasm. It is found in the cytosol. The catalysed reaction is (R)-5-phosphomevalonate + ATP = (R)-5-diphosphomevalonate + ADP. Its pathway is isoprenoid biosynthesis; isopentenyl diphosphate biosynthesis via mevalonate pathway; isopentenyl diphosphate from (R)-mevalonate: step 2/3. In terms of biological role, catalyzes the reversible ATP-dependent phosphorylation of mevalonate 5-phosphate to produce mevalonate diphosphate and ADP, a key step in the mevalonic acid mediated biosynthesis of isopentenyl diphosphate and other polyisoprenoid metabolites. The protein is Phosphomevalonate kinase (PMVK) of Bos taurus (Bovine).